A 300-amino-acid chain; its full sequence is GTPase Era (300 aa).

Residues 7-182 (YCGFIAIVGR…LRKGVHHFPE (176 aa)) form the Era-type G domain. Positions 15 to 22 (GRPNVGKS) are G1. 15–22 (GRPNVGKS) is a binding site for GTP. Residues 41–45 (QTTRH) are G2. Residues 62–65 (DTPG) form a G3 region. GTP-binding positions include 62 to 66 (DTPGL) and 124 to 127 (NKVD). A G4 region spans residues 124–127 (NKVD). The tract at residues 154–156 (ISA) is G5. Residues 206–283 (TGEELPYSVT…HLELWVKVKS (78 aa)) form the KH type-2 domain.

This sequence belongs to the TRAFAC class TrmE-Era-EngA-EngB-Septin-like GTPase superfamily. Era GTPase family. As to quaternary structure, monomer.

It localises to the cytoplasm. The protein localises to the cell inner membrane. An essential GTPase that binds both GDP and GTP, with rapid nucleotide exchange. Plays a role in 16S rRNA processing and 30S ribosomal subunit biogenesis and possibly also in cell cycle regulation and energy metabolism. The chain is GTPase Era from Histophilus somni (strain 129Pt) (Haemophilus somnus).